Consider the following 314-residue polypeptide: Epithelial cell adhesion molecule (314 aa).

The first 23 residues, 1-23, serve as a signal peptide directing secretion; it reads MAPPQVLAFGLLLAAATATFAAA. Residues 24-265 are Extracellular-facing; sequence QEECVCENYK…APEFSMQGLK (242 aa). 6 disulfide bridges follow: Cys-27-Cys-46, Cys-29-Cys-59, Cys-38-Cys-48, Cys-66-Cys-99, Cys-110-Cys-116, and Cys-118-Cys-135. Residues 63-135 form the Thyroglobulin type-1 domain; the sequence is AAKCLVMKAE…RTDKDTEITC (73 aa). Asn-74 is a glycosylation site (N-linked (GlcNAc...) asparagine; partial). Asn-111 carries an N-linked (GlcNAc...) asparagine glycan. Residue Asn-198 is glycosylated (N-linked (GlcNAc...) asparagine). A helical membrane pass occupies residues 266–288; sequence AGVIAVIVVVVIAVVAGIVVLVI. At 289-314 the chain is on the cytoplasmic side; that stretch reads SRKKRMAKYEKAEIKEMGEMHRELNA.

The protein belongs to the EPCAM family. In terms of assembly, monomer. Interacts with phosphorylated CLDN7. Hyperglycosylated in carcinoma tissue as compared with autologous normal epithelia. Glycosylation at Asn-198 is crucial for protein stability. In terms of tissue distribution, highly and selectively expressed by undifferentiated rather than differentiated embryonic stem cells (ESC). Levels rapidly diminish as soon as ESC's differentiate (at protein levels). Expressed in almost all epithelial cell membranes but not on mesodermal or neural cell membranes. Found on the surface of adenocarcinoma.

Its subcellular location is the lateral cell membrane. It is found in the cell junction. The protein resides in the tight junction. Functionally, may act as a physical homophilic interaction molecule between intestinal epithelial cells (IECs) and intraepithelial lymphocytes (IELs) at the mucosal epithelium for providing immunological barrier as a first line of defense against mucosal infection. Plays a role in embryonic stem cells proliferation and differentiation. Up-regulates the expression of FABP5, MYC and cyclins A and E. The chain is Epithelial cell adhesion molecule (EPCAM) from Homo sapiens (Human).